Consider the following 335-residue polypeptide: Anthranilate phosphoribosyltransferase (335 aa).

Residues Gly-79, 82 to 83 (GD), Ser-87, 89 to 92 (NIST), 107 to 115 (KHGNRSITS), and Ser-119 each bind 5-phospho-alpha-D-ribose 1-diphosphate. Gly-79 lines the anthranilate pocket. Position 91 (Ser-91) interacts with Mg(2+). Asn-110 lines the anthranilate pocket. Anthranilate is bound at residue Arg-165. The Mg(2+) site is built by Asp-224 and Glu-225.

The protein belongs to the anthranilate phosphoribosyltransferase family. Homodimer. Mg(2+) is required as a cofactor.

The enzyme catalyses N-(5-phospho-beta-D-ribosyl)anthranilate + diphosphate = 5-phospho-alpha-D-ribose 1-diphosphate + anthranilate. Its pathway is amino-acid biosynthesis; L-tryptophan biosynthesis; L-tryptophan from chorismate: step 2/5. In terms of biological role, catalyzes the transfer of the phosphoribosyl group of 5-phosphorylribose-1-pyrophosphate (PRPP) to anthranilate to yield N-(5'-phosphoribosyl)-anthranilate (PRA). The polypeptide is Anthranilate phosphoribosyltransferase (Lactococcus lactis subsp. cremoris (strain SK11)).